The primary structure comprises 466 residues: MTTTEAPSALSFECETGNYHTFCPISCVAWLYQKIEDSFFLVIGTKTCGYFLQNAMGVMIFAEPRYAMAELEEGDISAQLNDYAELKRLCTQIKRDRNPSVIVWIGTCTTEIIKMDLEGLAPKLEAEIGIPIVVARANGLDYAFTQGEDTVLAAMAARCPEAATSEADQQERTNAIQRLLQFGKSPAAEQQPASSKHPPLILFGSVPDPVATQLTIELAKQGITVSGWLPAKRYTELPVIAEGSYAIGLNPFLSRTATTLMRRRKCKVIGAPFPIGPDGSRAWIEKICSVLEIEPQGLAEREAQVWDSIEDYRQLVEGKQVFFMGDNLWEISLARFLVRCGMRCPEIGIPYLDRRYLGAELAMLEATCQSMGVPLPRLVEKPDNYNQLQRIEALQPDLVITGMAHANPLEARGISTKWSVEFTFAQIHGFGNARAILELVTRPLRRNLALGTLGGSQWVSEAVTSR.

Positions 23, 48, and 108 each coordinate [4Fe-4S] cluster.

This sequence belongs to the BchN/ChlN family. In terms of assembly, protochlorophyllide reductase is composed of three subunits; ChlL, ChlN and ChlB. Forms a heterotetramer of two ChlB and two ChlN subunits. [4Fe-4S] cluster is required as a cofactor.

It catalyses the reaction chlorophyllide a + oxidized 2[4Fe-4S]-[ferredoxin] + 2 ADP + 2 phosphate = protochlorophyllide a + reduced 2[4Fe-4S]-[ferredoxin] + 2 ATP + 2 H2O. Its pathway is porphyrin-containing compound metabolism; chlorophyll biosynthesis (light-independent). Its function is as follows. Component of the dark-operative protochlorophyllide reductase (DPOR) that uses Mg-ATP and reduced ferredoxin to reduce ring D of protochlorophyllide (Pchlide) to form chlorophyllide a (Chlide). This reaction is light-independent. The NB-protein (ChlN-ChlB) is the catalytic component of the complex. This is Light-independent protochlorophyllide reductase subunit N from Synechococcus elongatus (strain ATCC 33912 / PCC 7942 / FACHB-805) (Anacystis nidulans R2).